A 187-amino-acid chain; its full sequence is Probable chorismate pyruvate-lyase (187 aa).

Residues Arg-76, Leu-114, and Glu-173 each coordinate substrate.

Belongs to the UbiC family.

The protein localises to the cytoplasm. The catalysed reaction is chorismate = 4-hydroxybenzoate + pyruvate. The protein operates within cofactor biosynthesis; ubiquinone biosynthesis. Functionally, removes the pyruvyl group from chorismate, with concomitant aromatization of the ring, to provide 4-hydroxybenzoate (4HB) for the ubiquinone pathway. This Shewanella amazonensis (strain ATCC BAA-1098 / SB2B) protein is Probable chorismate pyruvate-lyase.